The chain runs to 104 residues: Small ribosomal subunit protein uS10 (104 aa).

The protein belongs to the universal ribosomal protein uS10 family. In terms of assembly, part of the 30S ribosomal subunit.

In terms of biological role, involved in the binding of tRNA to the ribosomes. This chain is Small ribosomal subunit protein uS10, found in Variovorax paradoxus (strain S110).